The chain runs to 519 residues: T-box transcription factor TBX5 (519 aa).

Residues 1–46 (MADTEEAYGMPDTPVEAEPKELQCEPKQDNQLGASSKTPTSPPAAF) are disordered. Residues 17–28 (AEPKELQCEPKQ) show a composition bias toward basic and acidic residues. A compositionally biased stretch (polar residues) spans 29–39 (DNQLGASSKTP). Positions 63–238 (LWLKFHEVGT…NNPFAKGFRG (176 aa)) form a DNA-binding region, T-box. Disordered regions lie at residues 254–282 (EYPV…RNIT), 293–312 (CENG…SAYT), and 326–372 (KRKV…TSFR). Residues 262–282 (TVRQKVSSNHSPFSQETRNIT) show a composition bias toward polar residues. The segment covering 298–309 (SSTSQDLLPSSS) has biased composition (low complexity). The span at 328-342 (KVSEEPAEHSYKKPY) shows a compositional bias: basic and acidic residues.

As to quaternary structure, monomer. Homodimer (via the T-box); binds DNA as homodimer.

The protein localises to the nucleus. It is found in the cytoplasm. Its function is as follows. DNA-binding protein that regulates the transcription of several genes and is involved in heart development and limb pattern formation. May bind to the core DNA motif of promoters. The sequence is that of T-box transcription factor TBX5 (tbx5) from Xenopus laevis (African clawed frog).